The primary structure comprises 201 residues: dITP/XTP pyrophosphatase (201 aa).

Position 7-12 (7-12 (SNNAHK)) interacts with substrate. D72 functions as the Proton acceptor in the catalytic mechanism. Position 72 (D72) interacts with Mg(2+). Substrate-binding positions include S73, 154-157 (FGYD), K177, and 182-183 (HR).

It belongs to the HAM1 NTPase family. In terms of assembly, homodimer. Requires Mg(2+) as cofactor.

It carries out the reaction XTP + H2O = XMP + diphosphate + H(+). The catalysed reaction is dITP + H2O = dIMP + diphosphate + H(+). The enzyme catalyses ITP + H2O = IMP + diphosphate + H(+). Functionally, pyrophosphatase that catalyzes the hydrolysis of nucleoside triphosphates to their monophosphate derivatives, with a high preference for the non-canonical purine nucleotides XTP (xanthosine triphosphate), dITP (deoxyinosine triphosphate) and ITP. Seems to function as a house-cleaning enzyme that removes non-canonical purine nucleotides from the nucleotide pool, thus preventing their incorporation into DNA/RNA and avoiding chromosomal lesions. The chain is dITP/XTP pyrophosphatase from Leuconostoc mesenteroides subsp. mesenteroides (strain ATCC 8293 / DSM 20343 / BCRC 11652 / CCM 1803 / JCM 6124 / NCDO 523 / NBRC 100496 / NCIMB 8023 / NCTC 12954 / NRRL B-1118 / 37Y).